The chain runs to 345 residues: Protein RecA (345 aa).

Residue 65–72 (GPESSGKT) coordinates ATP.

Belongs to the RecA family.

The protein localises to the cytoplasm. Can catalyze the hydrolysis of ATP in the presence of single-stranded DNA, the ATP-dependent uptake of single-stranded DNA by duplex DNA, and the ATP-dependent hybridization of homologous single-stranded DNAs. It interacts with LexA causing its activation and leading to its autocatalytic cleavage. This Colwellia psychrerythraea (strain 34H / ATCC BAA-681) (Vibrio psychroerythus) protein is Protein RecA.